The chain runs to 394 residues: Carbamoyl phosphate synthase small chain (394 aa).

Residues 1-188 (MIRKERAILA…PLPYAFPTLR (188 aa)) form a CPSase region. L-glutamine-binding residues include Ser49, Gly240, and Gly242. In terms of domain architecture, Glutamine amidotransferase type-1 spans 192–379 (RVVLMDFGIK…IEEIDAFEGA (188 aa)). The active-site Nucleophile is Cys267. Leu268, Gln271, Asn309, Gly311, and Tyr312 together coordinate L-glutamine. Residues His352 and Glu354 contribute to the active site.

It belongs to the CarA family. In terms of assembly, composed of two chains; the small (or glutamine) chain promotes the hydrolysis of glutamine to ammonia, which is used by the large (or ammonia) chain to synthesize carbamoyl phosphate. Tetramer of heterodimers (alpha,beta)4.

It carries out the reaction hydrogencarbonate + L-glutamine + 2 ATP + H2O = carbamoyl phosphate + L-glutamate + 2 ADP + phosphate + 2 H(+). It catalyses the reaction L-glutamine + H2O = L-glutamate + NH4(+). The protein operates within amino-acid biosynthesis; L-arginine biosynthesis; carbamoyl phosphate from bicarbonate: step 1/1. It participates in pyrimidine metabolism; UMP biosynthesis via de novo pathway; (S)-dihydroorotate from bicarbonate: step 1/3. Small subunit of the glutamine-dependent carbamoyl phosphate synthetase (CPSase). CPSase catalyzes the formation of carbamoyl phosphate from the ammonia moiety of glutamine, carbonate, and phosphate donated by ATP, constituting the first step of 2 biosynthetic pathways, one leading to arginine and/or urea and the other to pyrimidine nucleotides. The small subunit (glutamine amidotransferase) binds and cleaves glutamine to supply the large subunit with the substrate ammonia. This chain is Carbamoyl phosphate synthase small chain, found in Deinococcus geothermalis (strain DSM 11300 / CIP 105573 / AG-3a).